Reading from the N-terminus, the 210-residue chain is Acetoin utilization protein AcuA (210 aa).

The 142-residue stretch at 20-161 folds into the N-acetyltransferase domain; it reads LIEGPVSPED…YRKIMEKMMN (142 aa).

The protein belongs to the acetyltransferase family. Monomer.

It participates in ketone degradation; acetoin degradation. Its activity is regulated as follows. Activity is sensitive to salt concentration, a high concentration of KCL (500 mM) is needed for complete inactivation. Its function is as follows. Part of the acuABC operon, which is possibly involved in the breakdown of acetoin and butanediol. Acts as an acetyltransferase inactivating acetyl-CoA synthetase AcsA via acetylation at a Lys residue. The polypeptide is Acetoin utilization protein AcuA (acuA) (Bacillus subtilis (strain 168)).